The following is a 223-amino-acid chain: N-terminal Xaa-Pro-Lys N-methyltransferase 1 (223 aa).

Met-1 is subject to N-acetylmethionine. Thr-2 bears the N-acetylthreonine; in N-terminal Xaa-Pro-Lys N-methyltransferase 1, N-terminally processed mark. S-adenosyl-L-methionine contacts are provided by residues Gly-69, Arg-74, 91 to 93 (DIT), 119 to 120 (LQ), and Gln-135.

The protein belongs to the methyltransferase superfamily. NTM1 family.

It is found in the nucleus. The enzyme catalyses N-terminal L-alanyl-L-prolyl-L-lysyl-[protein] + 3 S-adenosyl-L-methionine = N-terminal N,N,N-trimethyl-L-alanyl-L-prolyl-L-lysyl-[protein] + 3 S-adenosyl-L-homocysteine + 3 H(+). The catalysed reaction is N-terminal L-seryl-L-prolyl-L-lysyl-[protein] + 3 S-adenosyl-L-methionine = N-terminal N,N,N-trimethyl-L-seryl-L-prolyl-L-lysyl-[protein] + 3 S-adenosyl-L-homocysteine + 3 H(+). It carries out the reaction N-terminal L-prolyl-L-prolyl-L-lysyl-[protein] + 2 S-adenosyl-L-methionine = N-terminal N,N-dimethyl-L-prolyl-L-prolyl-L-lysyl-[protein] + 2 S-adenosyl-L-homocysteine + 2 H(+). Distributive alpha-N-methyltransferase that methylates the N-terminus of target proteins containing the N-terminal motif [Ala/Gly/Pro/Ser]-Pro-Lys when the initiator Met is cleaved. Specifically catalyzes mono-, di- or tri-methylation of the exposed alpha-amino group of the Ala, Gly or Ser residue in the [Ala/Gly/Ser]-Pro-Lys motif and mono- or di-methylation of Pro in the Pro-Pro-Lys motif. Some of the substrates may be primed by NTMT2-mediated monomethylation. Catalyzes the trimethylation of the N-terminal Gly in CENPA (after removal of Met-1). Responsible for the N-terminal methylation of KLHL31, MYL2, MYL3, RB1, RCC1, RPL23A and SET. Required during mitosis for normal bipolar spindle formation and chromosome segregation via its action on RCC1. The sequence is that of N-terminal Xaa-Pro-Lys N-methyltransferase 1 (NTMT1) from Homo sapiens (Human).